A 1548-amino-acid polypeptide reads, in one-letter code: Lysine-specific demethylase 5D (1548 aa).

A JmjN domain is found at 14–55; the sequence is CPVFEPSWAEFRDPLGYIAKIRPIAEKSGICKIRPPADWQPP. An ARID domain is found at 79 to 169; that stretch reads TRVKLNYLDQ…IIYPYEIFQS (91 aa). Glycyl lysine isopeptide (Lys-Gly) (interchain with G-Cter in SUMO2) cross-links involve residues Lys205, Lys229, Lys244, and Lys279. Residues 208-229 are disordered; the sequence is CYSRRGKRLQPEPEPTEEDIEK. 2 positions are modified to phosphoserine: Ser300 and Ser316. The segment at 325-371 adopts a PHD-type 1 zinc-finger fold; that stretch reads VCRICSRGDEVDKFLLCDGCSDNYHIFCLLPPLSEVPKGVWRCPKCI. Residue Tyr439 coordinates 2-oxoglutarate. The region spanning 467-633 is the JmjC domain; sequence EYAACGWNLN…VGRQCIEHYR (167 aa). Positions 513 and 515 each coordinate Fe cation. 3 residues coordinate 2-oxoglutarate: Ser521, Asn523, and Lys531. A Fe cation-binding site is contributed by His601. A C5HC2 zinc finger spans residues 706–758; it reads CIKCKTTCFLSALACYDCPDSLVCLSHINDLCKCSRNRQYLRYRYTLDELPAM. A phosphoserine mark is found at Ser889 and Ser893. A Glycyl lysine isopeptide (Lys-Gly) (interchain with G-Cter in SUMO2) cross-link involves residue Lys1123. The PHD-type 2 zinc-finger motif lies at 1182 to 1243; that stretch reads ICICGQVCAG…DTKFLCPLCM (62 aa). Residue Ser1355 is modified to Phosphoserine. A disordered region spans residues 1438 to 1468; sequence KPENPGNWSEEQTPERRRQRRQKVVLSRKGE.

Belongs to the JARID1 histone demethylase family. As to quaternary structure, interacts withPCGF6, MSH5, ZMYND8, AR. The cofactor is L-ascorbate. Fe(2+) serves as cofactor.

The protein resides in the nucleus. The catalysed reaction is N(6),N(6),N(6)-trimethyl-L-lysyl(4)-[histone H3] + 3 2-oxoglutarate + 3 O2 = L-lysyl(4)-[histone H3] + 3 formaldehyde + 3 succinate + 3 CO2. Functionally, histone demethylase that specifically demethylates 'Lys-4' of histone H3, thereby playing a central role in histone code. Does not demethylate histone H3 'Lys-9', H3 'Lys-27', H3 'Lys-36', H3 'Lys-79' or H4 'Lys-20'. Demethylates trimethylated and dimethylated but not monomethylated H3 'Lys-4'. May play a role in spermatogenesis. Involved in transcriptional repression of diverse metastasis-associated genes; in this function seems to cooperate with ZMYND8. Suppresses prostate cancer cell invasion. Regulates androgen receptor (AR) transcriptional activity by demethylating H3K4me3 active transcription marks. The polypeptide is Lysine-specific demethylase 5D (Kdm5d) (Mus musculus (Mouse)).